A 502-amino-acid polypeptide reads, in one-letter code: Serine/threonine-protein kinase SKS1 (502 aa).

A Protein kinase domain is found at 10-338 (FRITAQIGSG…SEVSSLTSFT (329 aa)). ATP is bound by residues 16–24 (IGSGAYGLV) and Lys-39. The Proton acceptor role is filled by Asp-186. Composition is skewed to low complexity over residues 376–391 (QEQQQQQQQQQQQVQE) and 399–410 (EQIQNQEQAQQQ). The tract at residues 376–439 (QEQQQQQQQQ…GSMEKYEYTN (64 aa)) is disordered. The span at 411-420 (QEEEDAEPES) shows a compositional bias: acidic residues.

It belongs to the protein kinase superfamily. Ser/Thr protein kinase family.

It carries out the reaction L-seryl-[protein] + ATP = O-phospho-L-seryl-[protein] + ADP + H(+). The enzyme catalyses L-threonyl-[protein] + ATP = O-phospho-L-threonyl-[protein] + ADP + H(+). Functionally, may have a role in glucose regulation. This is Serine/threonine-protein kinase SKS1 (SKS1) from Saccharomyces cerevisiae (strain ATCC 204508 / S288c) (Baker's yeast).